Consider the following 207-residue polypeptide: MTRSVNTPWTLGLTGGIGSGKSAAAQHFIDLGVHVIDADHAARWVVEPGRPALEQIARHFGQGVLQADGQLDRAALRKLIFEVPEQRRWLEALLHPLIAEEIVSHLARAESPYAILVSPLLIESGQSRMTQRILVIDVPQQLQIERTLQRDQISEQQVQAILQAQASREERLRHADDVLVNDRDHAWLRSEVERLHHFYLTLRGGQS.

Positions 10-207 (TLGLTGGIGS…FYLTLRGGQS (198 aa)) constitute a DPCK domain. Position 18–23 (18–23 (GSGKSA)) interacts with ATP.

Belongs to the CoaE family.

Its subcellular location is the cytoplasm. It carries out the reaction 3'-dephospho-CoA + ATP = ADP + CoA + H(+). It functions in the pathway cofactor biosynthesis; coenzyme A biosynthesis; CoA from (R)-pantothenate: step 5/5. Its function is as follows. Catalyzes the phosphorylation of the 3'-hydroxyl group of dephosphocoenzyme A to form coenzyme A. The protein is Dephospho-CoA kinase of Pseudomonas fluorescens (strain ATCC BAA-477 / NRRL B-23932 / Pf-5).